We begin with the raw amino-acid sequence, 313 residues long: Malate dehydrogenase (313 aa).

Residues 8–13 and Asp-33 contribute to the NAD(+) site; that span reads GAGNVG. Substrate is bound by residues Arg-83 and Arg-89. NAD(+) contacts are provided by residues Asn-96 and 119 to 121; that span reads ISN. Asn-121 and Arg-152 together coordinate substrate. The Proton acceptor role is filled by His-176.

Belongs to the LDH/MDH superfamily. MDH type 3 family.

The catalysed reaction is (S)-malate + NAD(+) = oxaloacetate + NADH + H(+). In terms of biological role, catalyzes the reversible oxidation of malate to oxaloacetate. The polypeptide is Malate dehydrogenase (Bacteroides fragilis (strain ATCC 25285 / DSM 2151 / CCUG 4856 / JCM 11019 / LMG 10263 / NCTC 9343 / Onslow / VPI 2553 / EN-2)).